Reading from the N-terminus, the 143-residue chain is Nucleoside diphosphate kinase (143 aa).

In terms of domain architecture, NDPK-like spans 1–132; the sequence is MVKPDGVQRG…LWFSPQELCQ (132 aa). ADP contacts are provided by Lys3, Phe51, Arg79, Thr85, Arg96, Val103, and Asn106. Residues Lys3, Phe51, Arg79, Thr85, and Arg96 each coordinate ATP. Asn106 is an ATP binding site. His109 serves as the catalytic Pros-phosphohistidine intermediate.

The protein belongs to the NDK family. As to quaternary structure, homohexamer. Mg(2+) is required as a cofactor.

It carries out the reaction a 2'-deoxyribonucleoside 5'-diphosphate + ATP = a 2'-deoxyribonucleoside 5'-triphosphate + ADP. The enzyme catalyses a ribonucleoside 5'-diphosphate + ATP = a ribonucleoside 5'-triphosphate + ADP. The catalysed reaction is GDP + ATP = GTP + ADP. Its pathway is purine metabolism; purine nucleotide biosynthesis. Major role in the synthesis of nucleoside triphosphates other than ATP. The ATP gamma phosphate is transferred to the NDP beta phosphate via a ping-pong mechanism, using a phosphorylated active-site intermediate. This chain is Nucleoside diphosphate kinase, found in Schistosoma mansoni (Blood fluke).